The primary structure comprises 497 residues: Iron-sulfur cluster assembly factor IBA57, mitochondrial (497 aa).

The N-terminal 27 residues, 1-27 (MFISRRCRIKGFTLKNLLWFRSSSTRF), are a transit peptide targeting the mitochondrion. The tract at residues 414–433 (PTLNPFTNKPPERTKRKQRP) is disordered.

Belongs to the GcvT family. CAF17/IBA57 subfamily. As to quaternary structure, interacts with CCR4, ISA1 and ISA2.

The protein resides in the mitochondrion matrix. Its function is as follows. Required for lysine and glutamate prototrophy and mitochondrial genome maintenance. Has a role in the maturation of mitochondrial aconitase-type and radical-SAM Fe/S proteins biotin synthase and lipoic acid synthase. This is Iron-sulfur cluster assembly factor IBA57, mitochondrial from Saccharomyces cerevisiae (strain ATCC 204508 / S288c) (Baker's yeast).